A 371-amino-acid polypeptide reads, in one-letter code: Glutamate 5-kinase (371 aa).

An ATP-binding site is contributed by K10. Substrate-binding residues include S50, D137, and N149. ATP is bound by residues 169 to 170 (SD) and 208 to 214 (TGGMFTK). Residues 274–352 (EGRIYIDDGA…EEIRNILGED (79 aa)) form the PUA domain.

Belongs to the glutamate 5-kinase family.

Its subcellular location is the cytoplasm. The catalysed reaction is L-glutamate + ATP = L-glutamyl 5-phosphate + ADP. Its pathway is amino-acid biosynthesis; L-proline biosynthesis; L-glutamate 5-semialdehyde from L-glutamate: step 1/2. Functionally, catalyzes the transfer of a phosphate group to glutamate to form L-glutamate 5-phosphate. The polypeptide is Glutamate 5-kinase (Dictyoglomus turgidum (strain DSM 6724 / Z-1310)).